A 173-amino-acid chain; its full sequence is Ferritin, lower subunit (173 aa).

Residues 7 to 156 (QNFHQDCEAG…DHITSLKKLW (150 aa)) form the Ferritin-like diiron domain. Glu59 and His62 together coordinate Fe cation.

Belongs to the ferritin family. As to quaternary structure, oligomer of 24 subunits. The functional molecule is roughly spherical and contains a central cavity into which the polymeric mineral iron core is deposited.

Functionally, stores iron in a soluble, non-toxic, readily available form. Important for iron homeostasis. Iron is taken up in the ferrous form and deposited as ferric hydroxides after oxidation. This chain is Ferritin, lower subunit, found in Aquarana catesbeiana (American bullfrog).